The sequence spans 833 residues: Leucine--tRNA ligase (833 aa).

A 'HIGH' region motif is present at residues 41–52 (PYPSGAGLHVGH). A 'KMSKS' region motif is present at residues 610-614 (KMSKS). K613 lines the ATP pocket.

This sequence belongs to the class-I aminoacyl-tRNA synthetase family.

The protein localises to the cytoplasm. It carries out the reaction tRNA(Leu) + L-leucine + ATP = L-leucyl-tRNA(Leu) + AMP + diphosphate. This chain is Leucine--tRNA ligase, found in Streptococcus suis (strain 98HAH33).